We begin with the raw amino-acid sequence, 83 residues long: Hainantoxin-III 11 (83 aa).

A signal peptide spans 1–21 (MKASMFLALAGLVLLFVVGYA). The propeptide occupies 22–48 (SESEEKDFPRELLSKIFAVDDFKGEER). Cystine bridges form between C50-C65, C57-C70, and C64-C77. A Leucine amide modification is found at L81.

It belongs to the neurotoxin 10 (Hwtx-1) family. 15 (Hntx-3) subfamily. Monomer. In terms of tissue distribution, expressed by the venom gland.

The protein localises to the secreted. In terms of biological role, selective antagonist of neuronal tetrodotoxin (TTX)-sensitive voltage-gated sodium channels (IC(50)=1270 nM on Nav1.1/SCN1A, 270 nM on Nav1.2/SCN2A, 491 nM on Nav1.3/SCN3A and 232 nM on Nav1.7/SCN9A). This toxin suppress Nav1.7 current amplitude without significantly altering the activation, inactivation, and repriming kinetics. Short extreme depolarizations partially activate the toxin-bound channel, indicating voltage-dependent inhibition of this toxin. This toxin increases the deactivation of the Nav1.7 current after extreme depolarizations. The toxin-Nav1.7 complex is gradually dissociated upon prolonged strong depolarizations in a voltage-dependent manner, and the unbound toxin rebinds to Nav1.7 after a long repolarization. Moreover, analysis of chimeric channels showed that the DIIS3-S4 linker is critical for toxin binding to Nav1.7. These data are consistent with this toxin interacting with Nav1.7 site 4 and trapping the domain II voltage sensor in the closed state. This Cyriopagopus hainanus (Chinese bird spider) protein is Hainantoxin-III 11.